A 411-amino-acid chain; its full sequence is MSSVSQARSLGKYFLLMDNILVVMGFYMVFPLISIRFVDQLGWTALLVGIALGLRQFIQQGLGIFGGAFADKLGAKPMIITGMLMRALGFIFMGIADKPWLLWVSCILSALGGTLFDPPRTALVMKLTRPWERGRFYSLLMIQDSTCAMVGALLGSWLLQYNFKLVCLAGALLFLFAAILNAWLLPAYRISNAQTSMLEGIRRVLYDQRFVTYVFTLTGYYILSVQVMLILPIRVNEVAGQLAAVRWTYAIEAALSLSLLYPIARWSEKRFSLENRFMAGLTIMLLSIIPIGMIHNLQVLFLLIGIFYTGSIIAEPARETLGASLADNRARGSYMGFSRLGLALGGAIGYSGGGWLYDMGNQLDIPQLPWVMLGMIGLITLLGFYRQFHQHHYQTYSXYLSGTTKNNSYKQ.

Helical transmembrane passes span 13 to 33 (YFLLMDNILVVMGFYMVFPLI), 45 to 65 (ALLVGIALGLRQFIQQGLGIF), 73 to 95 (LGAKPMIITGMLMRALGFIFMGI), 99 to 116 (PWLLWVSCILSALGGTLF), 139 to 159 (LLMIQDSTCAMVGALLGSWLL), 165 to 185 (LVCLAGALLFLFAAILNAWLL), 213 to 233 (YVFTLTGYYILSVQVMLILPI), 243 to 263 (AAVRWTYAIEAALSLSLLYPI), 288 to 308 (IIPIGMIHNLQVLFLLIGIFY), 340 to 360 (LGLALGGAIGYSGGGWLYDMG), and 365 to 385 (IPQLPWVMLGMIGLITLLGFY).

Belongs to the major facilitator superfamily. DHA1 family. MdtH (TC 2.A.1.2.21) subfamily.

The protein localises to the cell membrane. In Baumannia cicadellinicola subsp. Homalodisca coagulata, this protein is Multidrug resistance protein MdtH.